Here is a 582-residue protein sequence, read N- to C-terminus: Sulfite reductase [NADPH] hemoprotein beta-component (582 aa).

Basic and acidic residues predominate over residues 1–12; it reads MDLKVKVDRSRD. The tract at residues 1 to 26 is disordered; sequence MDLKVKVDRSRDVSQPLDKLGPDETL. [4Fe-4S] cluster is bound by residues Cys-447, Cys-453, Cys-492, and Cys-496. Cys-496 is a binding site for siroheme.

It belongs to the nitrite and sulfite reductase 4Fe-4S domain family. In terms of assembly, alpha(8)-beta(8). The alpha component is a flavoprotein, the beta component is a hemoprotein. Siroheme serves as cofactor. Requires [4Fe-4S] cluster as cofactor.

It carries out the reaction hydrogen sulfide + 3 NADP(+) + 3 H2O = sulfite + 3 NADPH + 4 H(+). Its pathway is sulfur metabolism; hydrogen sulfide biosynthesis; hydrogen sulfide from sulfite (NADPH route): step 1/1. In terms of biological role, component of the sulfite reductase complex that catalyzes the 6-electron reduction of sulfite to sulfide. This is one of several activities required for the biosynthesis of L-cysteine from sulfate. The sequence is that of Sulfite reductase [NADPH] hemoprotein beta-component from Afipia carboxidovorans (strain ATCC 49405 / DSM 1227 / KCTC 32145 / OM5) (Oligotropha carboxidovorans).